We begin with the raw amino-acid sequence, 342 residues long: Dihydroorotate dehydrogenase (quinone) (342 aa).

FMN is bound by residues 61–65 (AGLDK) and Thr85. Lys65 lines the substrate pocket. Position 110–114 (110–114 (NRMGF)) interacts with substrate. The FMN site is built by Asn138 and Asn171. Asn171 contacts substrate. Residue Ser174 is the Nucleophile of the active site. Asn176 provides a ligand contact to substrate. 2 residues coordinate FMN: Lys216 and Thr244. 245 to 246 (NT) contacts substrate. FMN contacts are provided by residues Gly267, Gly296, and 317 to 318 (YS).

This sequence belongs to the dihydroorotate dehydrogenase family. Type 2 subfamily. As to quaternary structure, monomer. The cofactor is FMN.

The protein resides in the cell membrane. The catalysed reaction is (S)-dihydroorotate + a quinone = orotate + a quinol. Its pathway is pyrimidine metabolism; UMP biosynthesis via de novo pathway; orotate from (S)-dihydroorotate (quinone route): step 1/1. In terms of biological role, catalyzes the conversion of dihydroorotate to orotate with quinone as electron acceptor. This is Dihydroorotate dehydrogenase (quinone) from Pseudomonas aeruginosa (strain UCBPP-PA14).